A 709-amino-acid polypeptide reads, in one-letter code: Polyribonucleotide nucleotidyltransferase (709 aa).

D489 and D495 together coordinate Mg(2+). The region spanning P556–I615 is the KH domain. The S1 motif domain occupies G625 to K693.

Belongs to the polyribonucleotide nucleotidyltransferase family. Mg(2+) is required as a cofactor.

It is found in the cytoplasm. The enzyme catalyses RNA(n+1) + phosphate = RNA(n) + a ribonucleoside 5'-diphosphate. In terms of biological role, involved in mRNA degradation. Catalyzes the phosphorolysis of single-stranded polyribonucleotides processively in the 3'- to 5'-direction. The polypeptide is Polyribonucleotide nucleotidyltransferase (Streptococcus agalactiae serotype V (strain ATCC BAA-611 / 2603 V/R)).